Here is a 201-residue protein sequence, read N- to C-terminus: dITP/XTP pyrophosphatase (201 aa).

8–13 (TNNENK) contacts substrate. Residues Glu-41 and Asp-73 each coordinate Mg(2+). Catalysis depends on Asp-73, which acts as the Proton acceptor. Residues Ser-74, 154–157 (FGYD), Lys-177, and 182–183 (HR) each bind substrate.

The protein belongs to the HAM1 NTPase family. Homodimer. It depends on Mg(2+) as a cofactor.

It catalyses the reaction XTP + H2O = XMP + diphosphate + H(+). The catalysed reaction is dITP + H2O = dIMP + diphosphate + H(+). It carries out the reaction ITP + H2O = IMP + diphosphate + H(+). Functionally, pyrophosphatase that catalyzes the hydrolysis of nucleoside triphosphates to their monophosphate derivatives, with a high preference for the non-canonical purine nucleotides XTP (xanthosine triphosphate), dITP (deoxyinosine triphosphate) and ITP. Seems to function as a house-cleaning enzyme that removes non-canonical purine nucleotides from the nucleotide pool, thus preventing their incorporation into DNA/RNA and avoiding chromosomal lesions. The chain is dITP/XTP pyrophosphatase from Clostridium tetani (strain Massachusetts / E88).